The primary structure comprises 320 residues: Protein phosphatase PTC7 homolog fig (320 aa).

The 267-residue stretch at 49–315 (PYLVTAVQGR…DDITLILASV (267 aa)) folds into the PPM-type phosphatase domain. Mn(2+) is bound by residues aspartate 93, glycine 94, and aspartate 238.

It belongs to the PP2C family. It depends on Mg(2+) as a cofactor. The cofactor is Mn(2+).

The catalysed reaction is O-phospho-L-seryl-[protein] + H2O = L-seryl-[protein] + phosphate. It catalyses the reaction O-phospho-L-threonyl-[protein] + H2O = L-threonyl-[protein] + phosphate. The sequence is that of Protein phosphatase PTC7 homolog fig from Drosophila yakuba (Fruit fly).